The primary structure comprises 154 residues: Nucleoside diphosphate kinase A2 (154 aa).

The ATP site is built by K13, F61, R89, T95, R106, and N116. Catalysis depends on H119, which acts as the Pros-phosphohistidine intermediate.

The protein belongs to the NDK family. The cofactor is Mg(2+).

The protein resides in the cytoplasm. It catalyses the reaction a 2'-deoxyribonucleoside 5'-diphosphate + ATP = a 2'-deoxyribonucleoside 5'-triphosphate + ADP. The catalysed reaction is a ribonucleoside 5'-diphosphate + ATP = a ribonucleoside 5'-triphosphate + ADP. Major role in the synthesis of nucleoside triphosphates other than ATP. The ATP gamma phosphate is transferred to the NDP beta phosphate via a ping-pong mechanism, using a phosphorylated active-site intermediate. This Xenopus laevis (African clawed frog) protein is Nucleoside diphosphate kinase A2.